A 477-amino-acid polypeptide reads, in one-letter code: Trigger factor (477 aa).

The region spanning 169–254 (EDRVTIDYLG…VKEVAKPNEL (86 aa)) is the PPIase FKBP-type domain. A disordered region spans residues 435–477 (VSKEELTAEDEDAASEAKPAKKAAPKKKAAPKKKADEGKSEEA). Over residues 454-466 (AKKAAPKKKAAPK) the composition is skewed to basic residues. The span at 467–477 (KKADEGKSEEA) shows a compositional bias: basic and acidic residues.

It belongs to the FKBP-type PPIase family. Tig subfamily.

The protein resides in the cytoplasm. The catalysed reaction is [protein]-peptidylproline (omega=180) = [protein]-peptidylproline (omega=0). Involved in protein export. Acts as a chaperone by maintaining the newly synthesized protein in an open conformation. Functions as a peptidyl-prolyl cis-trans isomerase. The protein is Trigger factor of Brucella anthropi (strain ATCC 49188 / DSM 6882 / CCUG 24695 / JCM 21032 / LMG 3331 / NBRC 15819 / NCTC 12168 / Alc 37) (Ochrobactrum anthropi).